Reading from the N-terminus, the 657-residue chain is Glycogen debranching enzyme (657 aa).

Residue aspartate 334 is the Nucleophile of the active site. Residue glutamate 369 is the Proton donor of the active site. A disordered region spans residues alanine 458–threonine 485. Polar residues predominate over residues aspartate 465–histidine 475.

Belongs to the glycosyl hydrolase 13 family.

It is found in the cytoplasm. The catalysed reaction is Hydrolysis of (1-&gt;6)-alpha-D-glucosidic linkages to branches with degrees of polymerization of three or four glucose residues in limit dextrin.. It participates in glycan degradation; glycogen degradation. With respect to regulation, slightly activated by Ca(2+). Inhibited by divalent cations such as Zn(2+), Cu(2+), Fe(2+), Mg(2+), Mn(2+), but only slightly inhibited by EDTA. Functionally, removes maltotriose and maltotetraose chains that are attached by 1,6-alpha-linkage to the limit dextrin main chain, generating a debranched limit dextrin. Hydrolyzes the alpha-1,6-glycosidic linkages in amylopectin while does not hydrolyze the alpha-1,4-glycosidic linkages in amylose. Native glycogen is a poor substrate. This chain is Glycogen debranching enzyme, found in Dickeya chrysanthemi (Pectobacterium chrysanthemi).